The chain runs to 438 residues: MQVPEIEKQIGITLYSTDTDGLGGQLRQEVEDFIVKEITNREEGQEGKYLILELIKRDWDTHHLTRTLAKILQVSQKRISVAGTKDKRALTTQKISIFDIDAQKIEKIHLKDVELKVLGRSRKSVELGDLWGNNFRITIRNITHSSEEIHKLLEKTTNEILAQNGVPNFFGIQRFGSVRPVTHLVGKAIVEGDFEKAALLYIAEPFPDEPEDTRKARQFVKETLDFKEGLKIYPLHLGHERAMMNHLIANPDDFAGAFLVLPKNLYRMFVHGYQSYIYNIILCRRIEKGLSLNEAVEGDVVCFKNEHGLPDSSKTEKATTETVNAMNRLIKKKRAFITAPLPGHNTEFASGIPGEVEQAVLDELKVPLQGFNIEETPEMSSKGTRRELLLQVEPKFEVAEDELNPGKLKAVLEFMLPKGSYATTVLREYMKVDPLQMS.

Asp-86 acts as the Nucleophile in catalysis. Positions 165–390 constitute a TRUD domain; the sequence is GVPNFFGIQR…SKGTRRELLL (226 aa).

This sequence belongs to the pseudouridine synthase TruD family.

The catalysed reaction is uridine(13) in tRNA = pseudouridine(13) in tRNA. Functionally, could be responsible for synthesis of pseudouridine from uracil-13 in transfer RNAs. In Methanosarcina barkeri (strain Fusaro / DSM 804), this protein is Probable tRNA pseudouridine synthase D.